The primary structure comprises 684 residues: Phenoloxidase 2 (684 aa).

Residues 1–51 (MSNTAVLNDLVALYDRPTEPMFRVKAKKSFKVPKEYVTDRFKNVAVEISNR) constitute a propeptide, removed by PPAF1. N-linked (GlcNAc...) asparagine glycans are attached at residues Asn81 and Asn91. The Cu cation site is built by His209, His213, and His238. The N-linked (GlcNAc...) asparagine glycan is linked to Asn330. Glu350 functions as the Proton acceptor in the catalytic mechanism. 3 residues coordinate Cu cation: His365, His369, and His405. N-linked (GlcNAc...) asparagine glycosylation is found at Asn416, Asn487, Asn491, and Asn546. 2 disulfides stabilise this stretch: Cys581/Cys623 and Cys583/Cys630.

Belongs to the tyrosinase family. As to quaternary structure, dimer. Might form a homodimer or a heterodimer with PPO1. Might interact with PPAF2 (via CLIP domain); the interaction might be required for PPO2 activity. Requires Cu(2+) as cofactor. In terms of processing, precursor cleaved by PPAF1. As to expression, hemocytes.

It is found in the secreted. Functionally, this is a copper-containing oxidase that functions in the formation of pigments such as melanins and other polyphenolic compounds. Catalyzes the oxidation of o-diphenols (N-acetyldopamine, 4-methylcatechol and dopamine). Cannot oxidize monophenols and p-phenols (L-tyrosine, tyramine, gentisic acid and hydroquinone). Binds to the surface of hemocytes and is involved in hemocyte melanization. Activation of the enzyme in response to bacterial lipopolysaccharides (LPS) suggests it may play a role in innate immunity. In Holotrichia diomphalia (Korean black chafer), this protein is Phenoloxidase 2.